A 54-amino-acid polypeptide reads, in one-letter code: MWTLKARKEHTGISGKPTARTDRHGSTRSGDSELQASARRFSRLPDRCGAQGVT.

A disordered region spans residues 1–54 (MWTLKARKEHTGISGKPTARTDRHGSTRSGDSELQASARRFSRLPDRCGAQGVT).

This is an uncharacterized protein from Mycobacterium tuberculosis (strain ATCC 25618 / H37Rv).